The primary structure comprises 310 residues: Porphobilinogen deaminase (310 aa).

At C236 the chain carries S-(dipyrrolylmethanemethyl)cysteine.

It belongs to the HMBS family. Monomer. Requires dipyrromethane as cofactor.

It carries out the reaction 4 porphobilinogen + H2O = hydroxymethylbilane + 4 NH4(+). The protein operates within porphyrin-containing compound metabolism; protoporphyrin-IX biosynthesis; coproporphyrinogen-III from 5-aminolevulinate: step 2/4. Functionally, tetrapolymerization of the monopyrrole PBG into the hydroxymethylbilane pre-uroporphyrinogen in several discrete steps. This chain is Porphobilinogen deaminase, found in Nitratiruptor sp. (strain SB155-2).